The following is a 370-amino-acid chain: Aldo-keto reductase dtxS3 (370 aa).

Position 78 (aspartate 78) interacts with NADP(+). Tyrosine 83 functions as the Proton donor in the catalytic mechanism. Histidine 174 contacts substrate. NADP(+) is bound by residues 204–205 (SS), glutamine 230, 259–269 (GPLASGRLARR), and 333–341 (GSVGRIEEA).

Belongs to the aldo/keto reductase family.

It functions in the pathway secondary metabolite biosynthesis. In terms of biological role, aldo-keto reductase; part of the gene cluster that mediates the biosynthesis of destruxins, insecticidal cyclic hexadepsipeptides which induce flaccid paralysis and visceral muscle contraction in insects through targeting the calcium channels and vacuolar-type ATPases. The aldo-keto reductase dtxS3 converts alpha-ketoisocaproic acid from deaminated leucine into alpha-hydroxyisocaproic acid (HIC), which is the first substrate for destruxin assembly by dtxS1. L-aspartate decarboxylase dtxS4 converts aspartic acid into beta-alanine, the last substrate for the destruxin assembly line performed by dtxS1. The nonribosomal peptide synthetase dtxS1 synthesizes destruxins B and B2, whereas the cytochrome P450 monooxygenase dtxS2 is required to convert destruxin B into other destruxin derivatives, including destructins C, D, A and E. Destruxin E-diol (ED) is further produced in a non-enzymatic manner from destruxin E. Destruxins play an important role in virulence and escape from insect host immune defenses. This is Aldo-keto reductase dtxS3 from Metarhizium robertsii (strain ARSEF 23 / ATCC MYA-3075) (Metarhizium anisopliae (strain ARSEF 23)).